We begin with the raw amino-acid sequence, 191 residues long: MKIKKKERQRLLMELLEGNPFMTDEELSAHFGVSIQTIRLDRMEQNIPELRERIKDVAYKQRDSVIALAPEEVFGEIVDLVLEERAISIFDVGPEHVFERSGIARGHHLFAQANSLAVALVNNEFVLTAKASIQFTRPVRVGERVVAKAEMAGKGSGRTRILVTSHVNQEVVFTGEFAMYQQNETEERPQQ.

The region spanning 102 to 169 (GIARGHHLFA…RILVTSHVNQ (68 aa)) is the MaoC-like domain.

It belongs to the FapR family.

Its function is as follows. Transcriptional factor involved in regulation of membrane lipid biosynthesis by repressing genes involved in fatty acid and phospholipid metabolism. The polypeptide is Transcription factor FapR (Shouchella clausii (strain KSM-K16) (Alkalihalobacillus clausii)).